Reading from the N-terminus, the 149-residue chain is NPC intracellular cholesterol transporter 2 (149 aa).

The first 19 residues, 1 to 19 (MHFLAAAFLLLTLSASALA), serve as a signal peptide directing secretion. Cystine bridges form between Cys27/Cys140, Cys42/Cys47, and Cys93/Cys99. An N-linked (GlcNAc...) asparagine glycan is attached at Asn58. The residue at position 116 (Lys116) is an N6-acetyllysine.

It belongs to the NPC2 family. In terms of assembly, interacts with NPC1 (via the second lumenal domain) in a cholestrol-dependent manner. Interacts with NUS1/NgBR, the interaction stabilizes NCP2 and regulates cholesterol trafficking. Interacts with DHDDS. Interacts with NEDD4L (via C2 domain). Interacts with NPC1L1. Post-translationally, N-glycosylated. Found in the epididymal fluid as a 19 kDa glycoprotein that is processed during its passage through the epididymis into a 16 kDa protein. As to expression, found in the fluid from the distal caput to cauda epididymis, not detected in the rete testis and the proximal and middle caput epididymal fluids (at protein level).

Its subcellular location is the secreted. The protein localises to the endoplasmic reticulum. It localises to the lysosome. It carries out the reaction cholesterol(in) = cholesterol(out). In terms of biological role, intracellular cholesterol transporter which acts in concert with NPC1 and plays an important role in the egress of cholesterol from the lysosomal compartment. Unesterified cholesterol that has been released from LDLs in the lumen of the late endosomes/lysosomes is transferred by NPC2 to the cholesterol-binding pocket in the N-terminal domain of NPC1. May bind and mobilize cholesterol that is associated with membranes. NPC2 binds cholesterol with a 1:1 stoichiometry. Can bind a variety of sterols, including lathosterol, desmosterol and the plant sterols stigmasterol and beta-sitosterol. The secreted form of NCP2 regulates biliary cholesterol secretion via stimulation of ABCG5/ABCG8-mediated cholesterol transport. In Sus scrofa (Pig), this protein is NPC intracellular cholesterol transporter 2.